The sequence spans 213 residues: Putative manganese efflux pump MntP (213 aa).

6 helical membrane passes run 3-23, 36-56, 67-87, 130-150, 152-172, and 187-207; these read ILSIVLTGFGLAMDAFAVSVA, ALKVALFFGGFQALMPLIGWG, AFDHWIAFILLGFIGGKMIFE, LAIATSIDALAVGVSFAFLGI, IVQTIIIIGIITFVLCFLGVI, and IVGGVILILIGINILLEHTGI.

The protein belongs to the MntP (TC 9.B.29) family.

Its subcellular location is the cell membrane. In terms of biological role, probably functions as a manganese efflux pump. In Clostridium perfringens (strain SM101 / Type A), this protein is Putative manganese efflux pump MntP.